The chain runs to 932 residues: DNA mismatch repair protein MutS (932 aa).

A compositionally biased stretch (acidic residues) spans methionine 1–threonine 13. Residues methionine 1–methionine 26 form a disordered region. Glycine 648 to serine 655 lines the ATP pocket. The tract at residues asparagine 865 to asparagine 892 is disordered.

The protein belongs to the DNA mismatch repair MutS family.

Functionally, this protein is involved in the repair of mismatches in DNA. It is possible that it carries out the mismatch recognition step. This protein has a weak ATPase activity. This chain is DNA mismatch repair protein MutS, found in Haloquadratum walsbyi (strain DSM 16790 / HBSQ001).